Consider the following 476-residue polypeptide: Membrane-bound lytic murein transglycosylase F (476 aa).

Residues 1-15 (MRSFLLILFCVSLLT) form the signal peptide. The non-LT domain stretch occupies residues 16–258 (GCQGERVDAA…HLNEKYFAHV (243 aa)). The LT domain stretch occupies residues 259-476 (KRFDYVDTRA…QSEISAAQPN (218 aa)). Glu-303 is a catalytic residue. The disordered stretch occupies residues 456–476 (EAQQQTAEKQSQSEISAAQPN).

This sequence in the N-terminal section; belongs to the bacterial solute-binding protein 3 family. It in the C-terminal section; belongs to the transglycosylase Slt family.

Its subcellular location is the cell outer membrane. The catalysed reaction is Exolytic cleavage of the (1-&gt;4)-beta-glycosidic linkage between N-acetylmuramic acid (MurNAc) and N-acetylglucosamine (GlcNAc) residues in peptidoglycan, from either the reducing or the non-reducing ends of the peptidoglycan chains, with concomitant formation of a 1,6-anhydrobond in the MurNAc residue.. Functionally, murein-degrading enzyme that degrades murein glycan strands and insoluble, high-molecular weight murein sacculi, with the concomitant formation of a 1,6-anhydromuramoyl product. Lytic transglycosylases (LTs) play an integral role in the metabolism of the peptidoglycan (PG) sacculus. Their lytic action creates space within the PG sacculus to allow for its expansion as well as for the insertion of various structures such as secretion systems and flagella. This Shewanella loihica (strain ATCC BAA-1088 / PV-4) protein is Membrane-bound lytic murein transglycosylase F.